A 383-amino-acid polypeptide reads, in one-letter code: Acetylornithine deacetylase (383 aa).

His-80 is a Zn(2+) binding site. Asp-82 is an active-site residue. Asp-112 serves as a coordination point for Zn(2+). Glu-144 is a catalytic residue. 3 residues coordinate Zn(2+): Glu-145, Glu-169, and His-355.

The protein belongs to the peptidase M20A family. ArgE subfamily. Homodimer. Zn(2+) serves as cofactor. Co(2+) is required as a cofactor. Requires glutathione as cofactor.

It is found in the cytoplasm. It catalyses the reaction N(2)-acetyl-L-ornithine + H2O = L-ornithine + acetate. Its pathway is amino-acid biosynthesis; L-arginine biosynthesis; L-ornithine from N(2)-acetyl-L-ornithine (linear): step 1/1. Its function is as follows. Catalyzes the hydrolysis of the amide bond of N(2)-acetylated L-amino acids. Cleaves the acetyl group from N-acetyl-L-ornithine to form L-ornithine, an intermediate in L-arginine biosynthesis pathway, and a branchpoint in the synthesis of polyamines. This is Acetylornithine deacetylase from Klebsiella pneumoniae (strain 342).